Here is a 43-residue protein sequence, read N- to C-terminus: Large ribosomal subunit protein uL5 (43 aa).

Belongs to the universal ribosomal protein uL5 family. In terms of assembly, part of the 50S ribosomal subunit; part of the 5S rRNA/L5/L18/L25 subcomplex. Contacts the 5S rRNA and the P site tRNA. Forms a bridge to the 30S subunit in the 70S ribosome.

Its function is as follows. This is one of the proteins that bind and probably mediate the attachment of the 5S RNA into the large ribosomal subunit, where it forms part of the central protuberance. In the 70S ribosome it contacts protein S13 of the 30S subunit (bridge B1b), connecting the 2 subunits; this bridge is implicated in subunit movement. Contacts the P site tRNA; the 5S rRNA and some of its associated proteins might help stabilize positioning of ribosome-bound tRNAs. The sequence is that of Large ribosomal subunit protein uL5 (rplE) from Serratia marcescens.